We begin with the raw amino-acid sequence, 256 residues long: Phosphatidylglycerol--prolipoprotein diacylglyceryl transferase (256 aa).

The next 3 membrane-spanning stretches (helical) occupy residues 19–39 (VHWY…LGYW), 56–76 (LIFY…MLFY), and 91–111 (IWEG…AAWL). R139 contacts a 1,2-diacyl-sn-glycero-3-phospho-(1'-sn-glycerol). Residues 231–251 (FGWLTMGQVLSIPMLLIGIWL) form a helical membrane-spanning segment.

Belongs to the Lgt family.

Its subcellular location is the cell inner membrane. It carries out the reaction L-cysteinyl-[prolipoprotein] + a 1,2-diacyl-sn-glycero-3-phospho-(1'-sn-glycerol) = an S-1,2-diacyl-sn-glyceryl-L-cysteinyl-[prolipoprotein] + sn-glycerol 1-phosphate + H(+). The protein operates within protein modification; lipoprotein biosynthesis (diacylglyceryl transfer). Its function is as follows. Catalyzes the transfer of the diacylglyceryl group from phosphatidylglycerol to the sulfhydryl group of the N-terminal cysteine of a prolipoprotein, the first step in the formation of mature lipoproteins. The polypeptide is Phosphatidylglycerol--prolipoprotein diacylglyceryl transferase (Legionella pneumophila (strain Paris)).